The sequence spans 211 residues: Late expression factor 7 (211 aa).

In terms of biological role, involved in late/very late gene activation. This is Late expression factor 7 (LEF-7) from Orgyia pseudotsugata multicapsid polyhedrosis virus (OpMNPV).